A 414-amino-acid polypeptide reads, in one-letter code: Glutamyl-tRNA reductase (414 aa).

Residues 49–52, serine 108, 113–115, and glutamine 119 contribute to the substrate site; these read TCNR and EPQ. The Nucleophile role is filled by cysteine 50. An NADP(+)-binding site is contributed by 188–193; that stretch reads GAGQTG.

Belongs to the glutamyl-tRNA reductase family. As to quaternary structure, homodimer.

The enzyme catalyses (S)-4-amino-5-oxopentanoate + tRNA(Glu) + NADP(+) = L-glutamyl-tRNA(Glu) + NADPH + H(+). It participates in porphyrin-containing compound metabolism; protoporphyrin-IX biosynthesis; 5-aminolevulinate from L-glutamyl-tRNA(Glu): step 1/2. Its function is as follows. Catalyzes the NADPH-dependent reduction of glutamyl-tRNA(Glu) to glutamate 1-semialdehyde (GSA). This is Glutamyl-tRNA reductase from Francisella tularensis subsp. novicida (strain U112).